The chain runs to 510 residues: Ectonucleoside triphosphate diphosphohydrolase 1 (510 aa).

At 1 to 16 (MEDRRESELKTFCSKN) the chain is on the cytoplasmic side. Residues 17 to 37 (ILVILGFSSIIAVIALLALGL) traverse the membrane as a helical segment. At 38–477 (TQNKPLPENV…SSTRLSHSTY (440 aa)) the chain is on the extracellular side. Asn73 carries an N-linked (GlcNAc...) asparagine glycan. Cys84 and Cys108 are oxidised to a cystine. Glu174 acts as the Proton acceptor in catalysis. Asn245, Asn274, Asn291, and Asn333 each carry an N-linked (GlcNAc...) asparagine glycan. Cystine bridges form between Cys255–Cys300 and Cys281–Cys324. A disulfide bridge connects residues Cys337 and Cys342. The N-linked (GlcNAc...) asparagine glycan is linked to Asn370. A disulfide bridge connects residues Cys390 and Cys413. Asn457 carries N-linked (GlcNAc...) asparagine glycosylation. Residues 478–498 (VFLMVLFSLILVIVVIIGLFV) traverse the membrane as a helical segment. The Cytoplasmic portion of the chain corresponds to 499-510 (CHRPSYFWKDMV).

Belongs to the GDA1/CD39 NTPase family. Homodimer; disulfide-linked. Requires Ca(2+) as cofactor. Mg(2+) serves as cofactor. In terms of processing, N-glycosylated. Post-translationally, cleaved into two polypeptides that seem to stay together by non-covalent interactions. The N-terminus is blocked. In terms of processing, palmitoylated on Cys-13; which is required for caveola targeting. As to expression, highest expression found in vascular endothelium, smooth muscle, spleen and lung (at protein level). High expression also found in stomach, duodenum, kidney, lymph node and aorta (at protein level).

Its subcellular location is the membrane. It localises to the caveola. It catalyses the reaction a ribonucleoside 5'-triphosphate + 2 H2O = a ribonucleoside 5'-phosphate + 2 phosphate + 2 H(+). The catalysed reaction is a ribonucleoside 5'-triphosphate + H2O = a ribonucleoside 5'-diphosphate + phosphate + H(+). It carries out the reaction a ribonucleoside 5'-diphosphate + H2O = a ribonucleoside 5'-phosphate + phosphate + H(+). The enzyme catalyses ATP + 2 H2O = AMP + 2 phosphate + 2 H(+). It catalyses the reaction ATP + H2O = ADP + phosphate + H(+). The catalysed reaction is ADP + H2O = AMP + phosphate + H(+). It carries out the reaction CTP + 2 H2O = CMP + 2 phosphate + 2 H(+). The enzyme catalyses CTP + H2O = CDP + phosphate + H(+). It catalyses the reaction CDP + H2O = CMP + phosphate + H(+). The catalysed reaction is GTP + 2 H2O = GMP + 2 phosphate + 2 H(+). It carries out the reaction GTP + H2O = GDP + phosphate + H(+). The enzyme catalyses GDP + H2O = GMP + phosphate + H(+). It catalyses the reaction ITP + 2 H2O = IMP + 2 phosphate + 2 H(+). The catalysed reaction is ITP + H2O = IDP + phosphate + H(+). It carries out the reaction IDP + H2O = IMP + phosphate + H(+). The enzyme catalyses UTP + 2 H2O = UMP + 2 phosphate + 2 H(+). It catalyses the reaction UTP + H2O = UDP + phosphate + H(+). The catalysed reaction is UDP + H2O = UMP + phosphate + H(+). Its activity is regulated as follows. The ATP diphosphohydrolase activity is decreased by half by sodium azide. Functionally, catalyzes the hydrolysis of both di- and triphosphate nucleotides (NDPs and NTPs) and hydrolyze NTPs to nucleotide monophosphates (NMPs) in two distinct successive phosphate-releasing steps, with NDPs as intermediates and participates in the regulation of extracellular levels of nucleotides. By hydrolyzing proinflammatory ATP and platelet-activating ADP to AMP, it blocks platelet aggregation and supports blood flow. This is Ectonucleoside triphosphate diphosphohydrolase 1 from Sus scrofa (Pig).